The sequence spans 287 residues: Probable endonuclease 4 (287 aa).

Residues His69, His109, Glu144, Asp178, His181, His215, Asp228, His230, and Glu260 each coordinate Zn(2+).

It belongs to the AP endonuclease 2 family. Requires Zn(2+) as cofactor.

It catalyses the reaction Endonucleolytic cleavage to 5'-phosphooligonucleotide end-products.. Endonuclease IV plays a role in DNA repair. It cleaves phosphodiester bonds at apurinic or apyrimidinic (AP) sites, generating a 3'-hydroxyl group and a 5'-terminal sugar phosphate. The chain is Probable endonuclease 4 from Thermotoga petrophila (strain ATCC BAA-488 / DSM 13995 / JCM 10881 / RKU-1).